We begin with the raw amino-acid sequence, 282 residues long: Probable endonuclease 4 (282 aa).

Positions 69, 109, 145, 179, 182, 216, 229, 231, and 261 each coordinate Zn(2+).

It belongs to the AP endonuclease 2 family. The cofactor is Zn(2+).

The enzyme catalyses Endonucleolytic cleavage to 5'-phosphooligonucleotide end-products.. In terms of biological role, endonuclease IV plays a role in DNA repair. It cleaves phosphodiester bonds at apurinic or apyrimidinic (AP) sites, generating a 3'-hydroxyl group and a 5'-terminal sugar phosphate. The chain is Probable endonuclease 4 from Magnetococcus marinus (strain ATCC BAA-1437 / JCM 17883 / MC-1).